The sequence spans 237 residues: UPF0173 metal-dependent hydrolase BruAb2_0628 (237 aa).

It belongs to the UPF0173 family.

The sequence is that of UPF0173 metal-dependent hydrolase BruAb2_0628 from Brucella abortus biovar 1 (strain 9-941).